Consider the following 90-residue polypeptide: Arminin 7722 (90 aa).

Residues 1-18 form the signal peptide; the sequence is MRSASLILFVAIVALTYA. The propeptide occupies 19–59; it reads RSYEDIKEEIRNEVENEILDDLEEENDELDDNAQEVSDPRA. Residue Thr-87 is modified to Threonine amide.

This sequence belongs to the arminin family. As to expression, expressed in entodermal epithelium along the body column.

The protein resides in the secreted. It localises to the target cell membrane. Antimicrobial peptide with a broad-spectrum antimicrobial activity. Keeps its antibacterial activity under a wide range of salt concentrations that mimic physiological conditions of human blood, which is surprising, since Hydra is an obligate freshwater animal with nearly no salt tolerance. Does not affect red blood cells. The polypeptide is Arminin 7722 (Hydra vulgaris (Hydra)).